The chain runs to 588 residues: Proteasome-associated ATPase (588 aa).

Residues 1 to 10 are compositionally biased toward basic and acidic residues; it reads MAAHDDDINR. A disordered region spans residues 1 to 22; it reads MAAHDDDINRGTRPARGSEDPA. A coiled-coil region spans residues 47–94; the sequence is RILEERIVELQTNLAGVSAQNERLANTLREARDQIVALKEEVDRLAQP. Residue 276 to 281 coordinates ATP; the sequence is GCGKTL. Residues 587–588 form a docks into pockets in the proteasome alpha-ring region; sequence YL.

This sequence belongs to the AAA ATPase family. As to quaternary structure, homohexamer. Assembles into a hexameric ring structure that caps the 20S proteasome core. Strongly interacts with the prokaryotic ubiquitin-like protein Pup through a hydrophobic interface; the interacting region of ARC lies in its N-terminal coiled-coil domain. There is one Pup binding site per ARC hexamer ring. Upon ATP-binding, the C-terminus of ARC interacts with the alpha-rings of the proteasome core, possibly by binding to the intersubunit pockets.

The protein operates within protein degradation; proteasomal Pup-dependent pathway. ATPase which is responsible for recognizing, binding, unfolding and translocation of pupylated proteins into the bacterial 20S proteasome core particle. May be essential for opening the gate of the 20S proteasome via an interaction with its C-terminus, thereby allowing substrate entry and access to the site of proteolysis. Thus, the C-termini of the proteasomal ATPase may function like a 'key in a lock' to induce gate opening and therefore regulate proteolysis. The protein is Proteasome-associated ATPase of Streptomyces griseus subsp. griseus (strain JCM 4626 / CBS 651.72 / NBRC 13350 / KCC S-0626 / ISP 5235).